We begin with the raw amino-acid sequence, 244 residues long: tRNA pseudouridine synthase B (244 aa).

D46 acts as the Nucleophile in catalysis.

It belongs to the pseudouridine synthase TruB family. Type 1 subfamily.

The catalysed reaction is uridine(55) in tRNA = pseudouridine(55) in tRNA. In terms of biological role, responsible for synthesis of pseudouridine from uracil-55 in the psi GC loop of transfer RNAs. The chain is tRNA pseudouridine synthase B from Bordetella parapertussis (strain 12822 / ATCC BAA-587 / NCTC 13253).